We begin with the raw amino-acid sequence, 479 residues long: V-type ATP synthase beta chain (479 aa).

The interval 458-479 is disordered; the sequence is EGDSEREAPKMDSPHEEISEKS.

It belongs to the ATPase alpha/beta chains family.

Its function is as follows. Produces ATP from ADP in the presence of a proton gradient across the membrane. The V-type beta chain is a regulatory subunit. The protein is V-type ATP synthase beta chain of Nitrosococcus oceani (strain ATCC 19707 / BCRC 17464 / JCM 30415 / NCIMB 11848 / C-107).